A 380-amino-acid chain; its full sequence is GDP-mannose:cellobiosyl-diphosphopolyprenol alpha-mannosyltransferase (380 aa).

The protein belongs to the glycosyltransferase group 1 family. Glycosyltransferase 4 subfamily.

It catalyses the reaction beta-D-Glc-(1-&gt;4)-alpha-D-Glc-di-trans,octa-cis-undecaprenyl diphosphate + GDP-alpha-D-mannose = alpha-D-Man-(1-&gt;3)-beta-D-Glc-(1-&gt;4)-alpha-D-Glc-1-di-trans,octa-cis-undecaprenyl diphosphate + GDP + H(+). In terms of biological role, involved in the biosynthesis of the exopolysaccharide xanthan, a polymer that is comprised of repeating pentasaccharide units with the structure of a beta-(1,4)-linked D-glucose backbone with trisaccharide side chains composed of mannose-beta-(1,4)-glucuronic acid-beta-(1,2)-mannose attached to alternate glucose residues in the backbone by alpha-(1,3) linkages. Xanthan is involved in pathogenicity but has also been used in a variety of applications as a specialty polymer for commercial applications, including food additives, where they act as viscosifying, stabilizing, emulsifying, or gelling agents. The sequence is that of GDP-mannose:cellobiosyl-diphosphopolyprenol alpha-mannosyltransferase (gumH) from Xanthomonas campestris.